A 119-amino-acid chain; its full sequence is Ribonuclease (119 aa).

Positions 6 and 9 each coordinate substrate. His-11 functions as the Proton acceptor in the catalytic mechanism. Intrachain disulfides connect Cys-26-Cys-81, Cys-40-Cys-92, and Cys-58-Cys-107. Residues 41 to 45 (KFTNT) and Arg-82 each bind substrate. His-114 (proton donor) is an active-site residue.

The protein belongs to the pancreatic ribonuclease family. In terms of assembly, monomer. Interacts with and forms tight 1:1 complexes with RNH1. Dimerization of two such complexes may occur. Interaction with RNH1 inhibits this protein.

The protein resides in the secreted. The enzyme catalyses an [RNA] containing cytidine + H2O = an [RNA]-3'-cytidine-3'-phosphate + a 5'-hydroxy-ribonucleotide-3'-[RNA].. It catalyses the reaction an [RNA] containing uridine + H2O = an [RNA]-3'-uridine-3'-phosphate + a 5'-hydroxy-ribonucleotide-3'-[RNA].. Endonuclease that catalyzes the cleavage of RNA on the 3' side of pyrimidine nucleotides. Acts on single-stranded and double-stranded RNA. This is Ribonuclease from Chelonia mydas (Green sea-turtle).